We begin with the raw amino-acid sequence, 432 residues long: RNA exonuclease 4 (432 aa).

The span at 42–54 (ARKKAKKKFRKSK) shows a compositional bias: basic residues. The interval 42 to 177 (ARKKAKKKFR…AKKRTYSDIS (136 aa)) is disordered. Basic and acidic residues predominate over residues 121–137 (KASDKSKGDKQRTEKAK). At Ser-123 the chain carries Phosphoserine. Lys-127 is covalently cross-linked (Glycyl lysine isopeptide (Lys-Gly) (interchain with G-Cter in SUMO2)). Residues 230–381 (KRLGQKKRTI…PSLKRLSEKI (152 aa)) enclose the Exonuclease domain.

Belongs to the REXO4 family. Can bind ESR1 and ESR2. This interaction is abrogated by estrogen and augmented by tamoxifen treatment.

Its subcellular location is the nucleus. It localises to the nucleolus. May function as an exonuclease. The chain is RNA exonuclease 4 (Rexo4) from Mus musculus (Mouse).